A 247-amino-acid chain; its full sequence is tRNA pseudouridine synthase A (247 aa).

D52 acts as the Nucleophile in catalysis. A substrate-binding site is contributed by Y113.

It belongs to the tRNA pseudouridine synthase TruA family. In terms of assembly, homodimer.

The catalysed reaction is uridine(38/39/40) in tRNA = pseudouridine(38/39/40) in tRNA. In terms of biological role, formation of pseudouridine at positions 38, 39 and 40 in the anticodon stem and loop of transfer RNAs. The polypeptide is tRNA pseudouridine synthase A (Bartonella henselae (strain ATCC 49882 / DSM 28221 / CCUG 30454 / Houston 1) (Rochalimaea henselae)).